The chain runs to 1258 residues: MDAPEEPQPPVVYTMENKPIVTCAGDQNLFTSIYPTLSQQLPREPMEWRRSYGRAPKMIHLESNFVQFKEELLPKEGNKALLTFPFLHIYWTECCDTEVYKATVKDDLTKWQNVLKAHSSVDWLIVVVENDAKKKNKTNILPRTSIVDKIRNDFCNKQSDRCVVLSDPLKDSSRTQESWNAFLTKLRTLLLMSFTKNLGKFEDDMRTLREKRTEPGWSFCEYFMVQEELAFVFEMLQQFEDALVQYDELDALFSQYVVNFGAGDGANWLTFFCQPVKSWNGLVLRKPIDMEKRELIQKQEATLLDLRSYLFSRQCTLLLFLQRPWEVAQRALELLHSCVQELKLLEVSVPPGALDCWVFLSCLEVLQRIEGCCDRAQIDSNIAHMVGLWSYAMEKLKSLGYLCGLVSEKGPNSEDLNRTVDLLAGLGAERPETANTAQSPYKKLQEALSSVEAFEKHYLDLSHATIEMYTSIGRIRSAKLVGKDLAEFYMRKRSPQKAEMYLQGALKNYLAEGWALPVTHTRKQLAECQKHLGQMENYLQTSSLLASDHHLTEEERKYFCQEILSFASQQEDNPGHKVVLPMQFARLKDLHFDPPNAVVHAGGVLTVEITVCSQMPIPVHVDQIAVNVHFSIEKNNYRKTAEWLTKHKTSNGIITFPAEASLFPASQNSLPALELSEMLERSPSDNSLNTTGIICRNVHMLLRRQESGSSLEPPSGLALEDGAHVLRCSSVTLQPGANKIAFKTQAKEPGTYTLRQLRASVGPVWFVLAHIHPIVQYDVYSQEPQLHVEPLADSLLAGIPQKVKFTVTTGHYTVKNGDSLQLSNVEAMLILCQAENRAVVYSNSREECSTALLRIQSSDKVTSIGLPTAPAYHVIEFELEVLSLPSAPASGGDTSVPGTPELHRKQKDSQRAGHCMVTTDHKVSIDCPWSIYSTVIALTFSVPFRTEHSLLSAGTRKYVQVCVQNLSELDFELSDSNLEDKGHATDLRLAPLNTQSQQLIHSKQSVFFVWELTWTQEPPPPLHCQFSVGFSPASEEQLTVSLKPYTYEFQVENFFTLYSVRAEILPASGAEYCKTGSLCSLEVSITRLADLLDVDKDEALVESEDYFSTKLMYEVVDNSSNWAVCGKSCGVIAMPLAAQATHRVHMEVMPLFAGYLPLPDVRLFKYLPHHSAHASQLDADSWIENDSLSVDKHLDDQLDCSSLRSRGSTHSTSSSEHKGLPMPRLQALPAGQVFNSSTGMQVLVIPSQDDHVLEVSVT.

At Ser-707 the chain carries Phosphoserine. Disordered regions lie at residues 888-913 (PASGGDTSVPGTPELHRKQKDSQRAG) and 1201-1222 (SSLRSRGSTHSTSSSEHKGLPM). Over residues 901–911 (ELHRKQKDSQR) the composition is skewed to basic and acidic residues. Low complexity predominate over residues 1201–1214 (SSLRSRGSTHSTSS).

Belongs to the TRAPPC10 family. In terms of assembly, specific component of the multisubunit TRAPP II complex, which includes at least TRAPPC1, TRAPPC2, TRAPPC3, TRAPPC4, TRAPPC5, TRAPPC6A/B, TRAPPC9, TRAPPC10 and TRAPPC14. TRAPPC9, TRAPPC10 and TRAPPC14 are specific subunits of the TRAPP II complex. Interacts with TRAPPC14.

The protein resides in the golgi apparatus. The protein localises to the cis-Golgi network. Specific subunit of the TRAPP (transport protein particle) II complex, a highly conserved vesicle tethering complex that functions in late Golgi trafficking as a membrane tether. The sequence is that of Trafficking protein particle complex subunit 10 (Trappc10) from Mus musculus (Mouse).